The primary structure comprises 140 residues: Nucleoside diphosphate kinase (140 aa).

Positions 11, 59, 87, 93, 104, and 114 each coordinate ATP. H117 serves as the catalytic Pros-phosphohistidine intermediate.

The protein belongs to the NDK family. In terms of assembly, homotetramer. Requires Mg(2+) as cofactor.

It is found in the cytoplasm. The catalysed reaction is a 2'-deoxyribonucleoside 5'-diphosphate + ATP = a 2'-deoxyribonucleoside 5'-triphosphate + ADP. It catalyses the reaction a ribonucleoside 5'-diphosphate + ATP = a ribonucleoside 5'-triphosphate + ADP. In terms of biological role, major role in the synthesis of nucleoside triphosphates other than ATP. The ATP gamma phosphate is transferred to the NDP beta phosphate via a ping-pong mechanism, using a phosphorylated active-site intermediate. In Rickettsia typhi (strain ATCC VR-144 / Wilmington), this protein is Nucleoside diphosphate kinase.